Here is a 312-residue protein sequence, read N- to C-terminus: MKWSEICVHTTQLAVEAVSNLLHEVGAQGVVIEDVEDFDRMMAEDHFGEIWDVSDRETYPTSGVHVKAYVPASGDFQDLLSNLKKEIERLRTMLDIGSGDVTVAEIDEEDWAHSWKQYYKPVKISQQLTIVPLWEEYTPQPEENVILLDPGMAFGTGTHPTTMLCIQAIENYIREGDHVIDVGTGSGVLSIAAAKLGAASVKALDLDSVAVESARQNVETNGVGELVQVDTGDLLKGVEGEYDLVVANILADVILLFIEDAYARTKSGGRFITSGIIGEKRAEVTNALVAAGFEIEETRVMEDWVAIIAKKG.

T162, G183, D205, and N248 together coordinate S-adenosyl-L-methionine.

This sequence belongs to the methyltransferase superfamily. PrmA family.

It is found in the cytoplasm. It carries out the reaction L-lysyl-[protein] + 3 S-adenosyl-L-methionine = N(6),N(6),N(6)-trimethyl-L-lysyl-[protein] + 3 S-adenosyl-L-homocysteine + 3 H(+). In terms of biological role, methylates ribosomal protein L11. This Exiguobacterium sp. (strain ATCC BAA-1283 / AT1b) protein is Ribosomal protein L11 methyltransferase.